A 1219-amino-acid chain; its full sequence is MECALLCLCALRAAGPGPPWGPAGLGRLAKALQLCCFCCASVAVALASDSGSSGGSGLNDDYVFVVPVEVDSGGSYISHDILHHRKRRSAHGASNSLHYRVSAFGQDLHLELKPSAILSSHFRVQVLGKDGASETREPEVPQCLYQGFIRNDSSSSVAVSTCAGLSGLIRTRDNEFLISPLPQLLAQEHNYSSPAGHHPHVLYKRTAEKRVRWYQDYPGSQRTYPGHSPSHTPPASQSQEPEYSHRRWQKRHFCGRRKKYAPKPPAEDAYLRFDEYGGTGRPRRSAGKSQNGLNVETLVVADAKMVEKHGKDDVTTYILTVMNMVSSLFKDGTIGSDINIVVVSLILLEEEPEGLLINHHADQSLNSFCQWQSALVGKNGKRHDHAILLTGFDICSWKNEPCDTLGFAPISGMCSKYRSCTINEDTGLGLAFTIAHESGHNFGMVHDGEGNPCRKAEGNIMSPTLTGNNGVFSWSSCSRQYLKKFLSTPQAGCLVDEPKQTGQYKYPDKLPGQIYDADMQCKWQFGAKAKLCSLGVMKDICKSLWCHRVGHRCETKFMPAAEGTACGLSMWCRQGQCVKLGELGPRPIHGQWSAWSKWSECSRTCGGGVKFQERHCSNPKPQYGGKYCPGSSRIYKLCNINPCPENSLDFRAQQCAEYNNKPFRGWLYRWKPYTKVEEEDRCKLYCKAENFEFFFAMSGKVKDGTPCSPHRNDVCIDGICELVGCDHELGSKAVSDACGVCKGDNSTCKFYKGLYLSQHKANEYYPVVTIPAGARSIEIQELQLSSSYLAVRSLSQKYYLTGGWSIDWPGDFTFAGTTFEYQRSFNRPERLYAPGPTNETLVFEILTQGKNPGIAWKYALPKVMNVTQPATKRYHHTWRTVQSDCSVTCGGGYISIKAICLRDQHTQVNSSFCSVRTKPATEPKICNAFSCPAYWLPGEWSACSKSCAGGQQSRKIRCVQKKPFQKEEAVLHSLCPVSTPTQVQVCNSHACPPEWSPSPWSQCSKTCGRGVRRREVLCKSPAAETLPESLCSSSPRPEAQEGCVLGRCPKNNRLQWIASAWSECSATCGLGVRKRELKCVEKTLQGKLITFPERRCRNIKKPSLELEEACNQRTCPVYSMAVASWYSSPWQQCTVTCGGGVQTRSVHCMQQGRPSSSCLLHQKPPVLRACNTNFCPAPEKKDDPSCVDFFSWCHLVPQHGVCNHKFYGKQCCRSCTRKS.

The first 47 residues, 1–47, serve as a signal peptide directing secretion; the sequence is MECALLCLCALRAAGPGPPWGPAGLGRLAKALQLCCFCCASVAVALA. A propeptide spanning residues 48–284 is cleaved from the precursor; it reads SDSGSSGGSG…EYGGTGRPRR (237 aa). Asn151 and Asn190 each carry an N-linked (GlcNAc...) asparagine glycan. Residues 217 to 248 are disordered; it reads YPGSQRTYPGHSPSHTPPASQSQEPEYSHRRW. Over residues 218–241 the composition is skewed to polar residues; sequence PGSQRTYPGHSPSHTPPASQSQEP. The Peptidase M12B domain occupies 293-498; sequence LNVETLVVAD…PQAGCLVDEP (206 aa). Cystine bridges form between Cys369/Cys420, Cys395/Cys402, Cys414/Cys493, Cys453/Cys477, Cys521/Cys546, Cys532/Cys553, Cys541/Cys572, Cys566/Cys577, Cys601/Cys638, Cys605/Cys643, and Cys616/Cys628. His436 contributes to the Zn(2+) binding site. Glu437 is a catalytic residue. Zn(2+) is bound by residues His440 and His446. In terms of domain architecture, TSP type-1 1 spans 589-644; sequence HGQWSAWSKWSECSRTCGGGVKFQERHCSNPKPQYGGKYCPGSSRIYKLCNINPCP. N-linked (GlcNAc...) asparagine glycosylation is found at Asn745, Asn838, Asn865, and Asn909. TSP type-1 domains lie at 931–990, 991–1049, 1052–1116, and 1121–1176; these read CPAY…NSHA, CPPE…GRCP, NRLQ…RTCP, and AVAS…NFCP. The PLAC domain maps to 1182 to 1219; sequence DDPSCVDFFSWCHLVPQHGVCNHKFYGKQCCRSCTRKS.

Zn(2+) is required as a cofactor. The precursor is cleaved by a furin endopeptidase. Post-translationally, glycosylated. Can be O-fucosylated by POFUT2 on a serine or a threonine residue found within the consensus sequence C1-X(2)-(S/T)-C2-G of the TSP type-1 repeat domains where C1 and C2 are the first and second cysteine residue of the repeat, respectively. Fucosylated repeats can then be further glycosylated by the addition of a beta-1,3-glucose residue by the glucosyltransferase, B3GALTL. Fucosylation mediates the efficient secretion of ADAMTS family members. Can also be C-glycosylated with one or two mannose molecules on tryptophan residues within the consensus sequence W-X-X-W of the TPRs, and N-glycosylated. These other glycosylations can also facilitate secretion.

It localises to the secreted. The protein localises to the extracellular space. The protein resides in the extracellular matrix. In Mus musculus (Mouse), this protein is A disintegrin and metalloproteinase with thrombospondin motifs 18 (Adamts18).